A 626-amino-acid polypeptide reads, in one-letter code: Leucine aminopeptidase 2-1 (626 aa).

Substrate is bound by residues 134–136 (QCQ) and 259–264 (PYGGME). His288 is a binding site for Zn(2+). The Proton acceptor role is filled by Glu289. Residues His292 and Glu311 each contribute to the Zn(2+) site. Tyr389 serves as the catalytic Proton donor.

This sequence belongs to the peptidase M1 family. Zn(2+) serves as cofactor.

It is found in the cytoplasm. The protein resides in the nucleus. It catalyses the reaction an epoxide + H2O = an ethanediol. Functionally, aminopeptidase that preferentially cleaves di- and tripeptides. Also has low epoxide hydrolase activity (in vitro). Can hydrolyze the epoxide leukotriene LTA(4) but it forms preferentially 5,6-dihydroxy-7,9,11,14-eicosatetraenoic acid rather than the cytokine leukotriene B(4) as the product compared to the homologous mammalian enzyme (in vitro). The polypeptide is Leucine aminopeptidase 2-1 (LKA4) (Scheffersomyces stipitis (strain ATCC 58785 / CBS 6054 / NBRC 10063 / NRRL Y-11545) (Yeast)).